Consider the following 191-residue polypeptide: MSLNVELIKDKILSENYFVLRNITYDLTRKDGEVVRHKREVYDRGNGAAVLLYNREKKSVVLIRQFRVATWVNGNPDGMLIEACAGLLDDDEPEVCIRKEAIEETGYRVNAAEKVFELYTSPGGVTELIHLFIAEYDDASRANEGGGVEDEEIEVLEMPFSEALEKVRQGVIRDAKTVLLLQHLQLRGIMD.

GDP-alpha-D-mannose contacts are provided by residues Tyr17, Lys38–Glu40, Arg67, and Ala85–Leu87. In terms of domain architecture, Nudix hydrolase spans Asp43–Leu180. Mg(2+) is bound by residues Ala85, Glu100, and Glu104. Positions Gly86–Gly106 match the Nudix box motif. Residues Glu104, Glu127, Asp150–Glu151, and Lys176 contribute to the GDP-alpha-D-mannose site. Glu151 is a Mg(2+) binding site.

Belongs to the Nudix hydrolase family. NudK subfamily. Homodimer. It depends on Mg(2+) as a cofactor.

It carries out the reaction GDP-alpha-D-mannose + H2O = alpha-D-mannose 1-phosphate + GMP + 2 H(+). Functionally, nucleoside diphosphate sugar hydrolase that hydrolyzes GDP-mannose as its preferred substrate, yielding GMP and mannose-1-phosphate. In Cronobacter sakazakii (strain ATCC BAA-894) (Enterobacter sakazakii), this protein is GDP-mannose pyrophosphatase (nudK).